The following is a 286-amino-acid chain: Phosphate import ATP-binding protein PstB (286 aa).

Residues 40–281 (IAVRNLDFYY…PREQRTQEYI (242 aa)) enclose the ABC transporter domain. 72–79 (GPSGCGKS) lines the ATP pocket.

Belongs to the ABC transporter superfamily. Phosphate importer (TC 3.A.1.7) family. The complex is composed of two ATP-binding proteins (PstB), two transmembrane proteins (PstC and PstA) and a solute-binding protein (PstS).

Its subcellular location is the cell inner membrane. The enzyme catalyses phosphate(out) + ATP + H2O = ADP + 2 phosphate(in) + H(+). Functionally, part of the ABC transporter complex PstSACB involved in phosphate import. Responsible for energy coupling to the transport system. The polypeptide is Phosphate import ATP-binding protein PstB (Granulibacter bethesdensis (strain ATCC BAA-1260 / CGDNIH1)).